The sequence spans 60 residues: Protein translocase subunit SecE (60 aa).

A helical transmembrane segment spans residues valine 31–isoleucine 51.

This sequence belongs to the SecE/SEC61-gamma family. Component of the Sec protein translocase complex. Heterotrimer consisting of SecY, SecE and SecG subunits. The heterotrimers can form oligomers, although 1 heterotrimer is thought to be able to translocate proteins. Interacts with the ribosome. Interacts with SecDF, and other proteins may be involved. Interacts with SecA.

The protein localises to the cell membrane. In terms of biological role, essential subunit of the Sec protein translocation channel SecYEG. Clamps together the 2 halves of SecY. May contact the channel plug during translocation. The sequence is that of Protein translocase subunit SecE from Staphylococcus aureus (strain Mu50 / ATCC 700699).